Reading from the N-terminus, the 417-residue chain is Actin-related protein 10 (417 aa).

Belongs to the actin family. In terms of assembly, subunit of dynactin, a multiprotein complex part of a tripartite complex with dynein and a adapter, such as BICDL1, BICD2 or HOOK3. The dynactin complex is built around ACTR1A/ACTB filament and consists of an actin-related filament composed of a shoulder domain, a pointed end and a barbed end. Its length is defined by its flexible shoulder domain. The soulder is composed of 2 DCTN1 subunits, 4 DCTN2 and 2 DCTN3. The 4 DCNT2 (via N-terminus) bind the ACTR1A filament and act as molecular rulers to determine the length. The pointed end is important for binding dynein-dynactin cargo adapters. Consists of 4 subunits: ACTR10, DCNT4, DCTN5 and DCTN6. The barbed end is composed of a CAPZA1:CAPZB heterodimers, which binds ACTR1A/ACTB filament and dynactin and stabilizes dynactin.

It localises to the cytoplasm. The protein localises to the cytoskeleton. Part of the dynactin complex that activates the molecular motor dynein for ultra-processive transport along microtubules. In Sus scrofa (Pig), this protein is Actin-related protein 10 (ACTR10).